A 469-amino-acid chain; its full sequence is ATP sulfurylase 4, chloroplastic (469 aa).

A chloroplast-targeting transit peptide spans 1-51 (MASSAAAIVSGSPFRSSPLIHNHHASRYAPGSISVVSLPRQVSRRGLSVKS).

The protein belongs to the sulfate adenylyltransferase family. In terms of assembly, homotetramer. As to expression, expressed in roots and leaves.

The protein localises to the plastid. It is found in the chloroplast stroma. It carries out the reaction sulfate + ATP + H(+) = adenosine 5'-phosphosulfate + diphosphate. It functions in the pathway sulfur metabolism; hydrogen sulfide biosynthesis; sulfite from sulfate: step 1/3. Functionally, sulfate adenylyltransferase. Catalyzes the first step of the sulfate assimilation pathway. The sequence is that of ATP sulfurylase 4, chloroplastic (APS4) from Arabidopsis thaliana (Mouse-ear cress).